The sequence spans 728 residues: Pre-mRNA-splicing ATP-dependent RNA helicase prp-28 (728 aa).

Residues 19–155 (KKEEEAAAAK…NDEAELRARY (137 aa)) form a disordered region. 3 stretches are compositionally biased toward basic and acidic residues: residues 33 to 59 (PKKERERLEAEKKAKEEEERKRKEEAK), 109 to 125 (RDYRDNRDNRDNRDRNQ), and 137 to 153 (EEKRAKMERNDEAELRA). Residues 293–321 (RSWEESTLPRRLLDIVKNVGYDEPTPIQR) carry the Q motif motif. Positions 324–527 (IPIALQARDL…KKYLRRPAIV (204 aa)) constitute a Helicase ATP-binding domain. 337–344 (AVTGSGKT) serves as a coordination point for ATP. The DEAD box signature appears at 450–453 (DEAD). A Helicase C-terminal domain is found at 538–701 (TVEQRVEFVS…KVPDELRRHE (164 aa)). The segment at 692-728 (KVPDELRRHEAAQNKPQKGQKKLEESNGYSGKGGSWN) is disordered. The span at 693–703 (VPDELRRHEAA) shows a compositional bias: basic and acidic residues.

The protein belongs to the DEAD box helicase family. DDX23/PRP28 subfamily. As to quaternary structure, component of the U5 snRNP complex.

Its subcellular location is the cytoplasm. It localises to the nucleus. The catalysed reaction is ATP + H2O = ADP + phosphate + H(+). ATP-dependent RNA helicase involved in mRNA splicing. May destabilize the U1/5'-splice site duplex to permit an effective competition for the 5'-splice site by the U6 snRNA, resulting in the switch between U1 and U6 at the 5'-splice site. May also act to unwind the U4/U6 base-pairing interaction in the U4/U6/U5 snRNP, facilitating the first covalent step of splicing. This is Pre-mRNA-splicing ATP-dependent RNA helicase prp-28 (prp-28) from Neurospora crassa (strain ATCC 24698 / 74-OR23-1A / CBS 708.71 / DSM 1257 / FGSC 987).